A 147-amino-acid chain; its full sequence is Proteinase inhibitor type-2 T (147 aa).

The signal sequence occupies residues 1 to 25 (MAVHKEVSFVAYLLIVLGMFLYVDA). 2 tandem repeats follow at residues 25-82 (ALGC…PKNP) and 83-142 (KACP…EPKP). Intrachain disulfides connect C28–C116, C32–C112, C40–C122, C52–C89, C55–C73, C56–C85, C62–C98, and C115–C133.

Belongs to the protease inhibitor I20 (potato type II proteinase inhibitor) family.

In terms of biological role, inhibitor of trypsin and chymotrypsin. The protein is Proteinase inhibitor type-2 T (PIN2T) of Solanum tuberosum (Potato).